Reading from the N-terminus, the 642-residue chain is Kelch-like protein 17 (642 aa).

The interval 1–53 (MQPRSERPAGRTQSPEHGSPGPGPEAPPPPPPQPPAPEAERTRPRQARPAAPM) is disordered. The span at 21–37 (GPGPEAPPPPPPQPPAP) shows a compositional bias: pro residues. Residues 92–159 (CDIVLHVAAK…AYTAEIVVGE (68 aa)) enclose the BTB domain. Residues 194–296 (CLGIRGFADA…SRDFLLGHVD (103 aa)) enclose the BACK domain. An interaction with F-actin region spans residues 289–641 (DFLLGHVDAE…SPTLSVSSTS (353 aa)). Kelch repeat units follow at residues 343-389 (VLFA…AVGN), 390-436 (RLYA…ALHG), 438-483 (LYSA…TLDG), 484-530 (NLYA…VLEG), 532-577 (LYVA…AMDG), and 578-624 (WLYA…VLEL). The tract at residues 640 to 642 (TSL) is interaction with PDZK1.

In terms of assembly, interacts with F-actin; the interaction disrupts the F-actin structures and leads to marked changes of neuronal morphology. Component of a complex, composed of PDZK1, SYNGAP1, KLHL17 and NMDA receptors. Interacts directly with PDZK1 (via PDZ1 domain); the interaction is important for integrity of actin cytoskeleton structures in neurons. Interacts with DLG4 and SYNGAP1. Interacts (via kelch repeats) with GRIK2 (via C-terminus); the interaction targets GRIK2 for degradation via ubiquitin-proteasome pathway. Interacts with GRIK1. Interacts with (via BTB domain) CUL3; the interaction regulates surface GRIK2 expression.

The protein localises to the postsynaptic density. It is found in the synapse. It functions in the pathway protein modification; protein ubiquitination. Functionally, substrate-recognition component of some cullin-RING-based BCR (BTB-CUL3-RBX1) E3 ubiquitin-protein ligase complexes. The BCR(KLHL17) complex mediates the ubiquitination and subsequent degradation of GLUR6. May play a role in the actin-based neuronal function. This chain is Kelch-like protein 17 (KLHL17), found in Homo sapiens (Human).